The chain runs to 92 residues: Putative regulatory protein Tpet_0986 (92 aa).

It belongs to the RemA family.

This Thermotoga petrophila (strain ATCC BAA-488 / DSM 13995 / JCM 10881 / RKU-1) protein is Putative regulatory protein Tpet_0986.